A 76-amino-acid polypeptide reads, in one-letter code: Acyl carrier protein (76 aa).

The 76-residue stretch at 1-76 folds into the Carrier domain; sequence MSIEERVKKI…SAIDYVQNNQ (76 aa). S36 is subject to O-(pantetheine 4'-phosphoryl)serine.

It belongs to the acyl carrier protein (ACP) family. Post-translationally, 4'-phosphopantetheine is transferred from CoA to a specific serine of apo-ACP by AcpS. This modification is essential for activity because fatty acids are bound in thioester linkage to the sulfhydryl of the prosthetic group.

It localises to the cytoplasm. It participates in lipid metabolism; fatty acid biosynthesis. Carrier of the growing fatty acid chain in fatty acid biosynthesis. This is Acyl carrier protein from Haemophilus influenzae (strain 86-028NP).